The following is a 311-amino-acid chain: Aspartate carbamoyltransferase catalytic subunit (311 aa).

2 residues coordinate carbamoyl phosphate: Arg-58 and Thr-59. Lys-86 serves as a coordination point for L-aspartate. The carbamoyl phosphate site is built by Arg-108, His-136, and Gln-139. L-aspartate is bound by residues Arg-169 and Arg-224. Residues Gly-265 and Pro-266 each contribute to the carbamoyl phosphate site.

It belongs to the aspartate/ornithine carbamoyltransferase superfamily. ATCase family. In terms of assembly, heterododecamer (2C3:3R2) of six catalytic PyrB chains organized as two trimers (C3), and six regulatory PyrI chains organized as three dimers (R2).

The catalysed reaction is carbamoyl phosphate + L-aspartate = N-carbamoyl-L-aspartate + phosphate + H(+). Its pathway is pyrimidine metabolism; UMP biosynthesis via de novo pathway; (S)-dihydroorotate from bicarbonate: step 2/3. In terms of biological role, catalyzes the condensation of carbamoyl phosphate and aspartate to form carbamoyl aspartate and inorganic phosphate, the committed step in the de novo pyrimidine nucleotide biosynthesis pathway. The protein is Aspartate carbamoyltransferase catalytic subunit of Geotalea daltonii (strain DSM 22248 / JCM 15807 / FRC-32) (Geobacter daltonii).